The following is a 449-amino-acid chain: Glucose-6-phosphate isomerase (449 aa).

The active-site Proton donor is the Glu-291. Catalysis depends on residues His-312 and Lys-426.

It belongs to the GPI family.

It is found in the cytoplasm. It catalyses the reaction alpha-D-glucose 6-phosphate = beta-D-fructose 6-phosphate. It functions in the pathway carbohydrate biosynthesis; gluconeogenesis. The protein operates within carbohydrate degradation; glycolysis; D-glyceraldehyde 3-phosphate and glycerone phosphate from D-glucose: step 2/4. Its function is as follows. Catalyzes the reversible isomerization of glucose-6-phosphate to fructose-6-phosphate. This chain is Glucose-6-phosphate isomerase, found in Pediococcus pentosaceus (strain ATCC 25745 / CCUG 21536 / LMG 10740 / 183-1w).